The primary structure comprises 426 residues: Endothelin-1 receptor (426 aa).

The first 20 residues, 1–20, serve as a signal peptide directing secretion; sequence MGVLCFLASFWLALVGGAIA. Over 21-80 the chain is Extracellular; sequence DNAERYSANLSSHVEDFTPFPGTEFNFLGTTLQPPNLALPSNGSMHGYCPQQTKITTAFK. 2 N-linked (GlcNAc...) asparagine glycosylation sites follow: Asn-29 and Asn-62. A helical membrane pass occupies residues 81 to 102; that stretch reads YINTVISCTIFIVGMVGNATLL. Residues 103 to 112 are Cytoplasmic-facing; that stretch reads RIIYQNKCMR. Residues 113–132 traverse the membrane as a helical segment; that stretch reads NGPNALIASLALGDLIYVVI. Residues 133-159 are Extracellular-facing; sequence DLPINVFKLLAGRWPFDHNDFGVFLCK. Residues Cys-158 and Cys-239 are joined by a disulfide bond. A helical membrane pass occupies residues 160 to 181; it reads LFPFLQKSSVGITVLNLCALSV. Over 182–205 the chain is Cytoplasmic; that stretch reads DRYRAVASWSRVQGIGIPLITAIE. Residues 206-229 form a helical membrane-spanning segment; that stretch reads IVSIWILSFILAIPEAIGFVMVPF. Residues 230 to 256 lie on the Extracellular side of the membrane; that stretch reads EYKGEQHRTCMLNATTKFMEFYQDVKD. A helical membrane pass occupies residues 257 to 278; sequence WWLFGFYFCMPLVCTAIFYTLM. Residues 279 to 306 lie on the Cytoplasmic side of the membrane; that stretch reads TCEMLNRRNGSLRIALSEHLKQRREVAK. Residues 307–328 form a helical membrane-spanning segment; the sequence is TVFCLVVIFALCWFPLHLSRIL. Over 329–347 the chain is Extracellular; that stretch reads KKTVYDEMDKNRCELLSFL. Residues 348–372 form a helical membrane-spanning segment; the sequence is LLMDYIGINLATMNSCINPIALYFV. The Cytoplasmic portion of the chain corresponds to 373–426; sequence SKKFKNCFQSCLCCCCHQSKSLMTSVPMNGTSIQWKNQEQNHNTERSSHKDSMN. A Phosphoserine modification is found at Ser-424.

This sequence belongs to the G-protein coupled receptor 1 family. Endothelin receptor subfamily. EDNRA sub-subfamily. As to quaternary structure, interacts with HDAC7 and KAT5. As to expression, predominantly expressed in vascular smooth muscle cells of a variety of issues, bronchial smooth muscle cells, myocardium, and the pituitary gland.

Its subcellular location is the cell membrane. Functionally, receptor for endothelin-1. Mediates its action by association with G proteins that activate a phosphatidylinositol-calcium second messenger system. The rank order of binding affinities for ET-A is: ET1 &gt; ET2 &gt;&gt; ET3. The polypeptide is Endothelin-1 receptor (Rattus norvegicus (Rat)).